Consider the following 193-residue polypeptide: MGDFFFILLSTALVNNVVLVKFLGLCPFMGVSRKTDAAIGMGLATTFVLTLAAGASWMVEALILEPLDLTFLRILSLILVIAAIVQFIEVVMRKLAPGLHRALGIYLPLITTNCAVLGVALLNIQEGHGLASSLLYGFGSASGFTLVLVIFAGMRERLAQLSVPGPFAGAPIAFISAGLLSMAFMGFAGLAPN.

Transmembrane regions (helical) follow at residues 4-24 (FFFILLSTALVNNVVLVKFLG), 39-59 (IGMGLATTFVLTLAAGASWMV), 71-91 (FLRILSLILVIAAIVQFIEVV), 102-122 (ALGIYLPLITTNCAVLGVALL), 134-154 (LLYGFGSASGFTLVLVIFAGM), and 167-187 (FAGAPIAFISAGLLSMAFMGF).

It belongs to the NqrDE/RnfAE family. In terms of assembly, the complex is composed of six subunits: RnfA, RnfB, RnfC, RnfD, RnfE and RnfG.

It localises to the cellular chromatophore membrane. Its function is as follows. Part of a membrane-bound complex that couples electron transfer with translocation of ions across the membrane. The sequence is that of Ion-translocating oxidoreductase complex subunit A from Cereibacter sphaeroides (strain ATCC 17029 / ATH 2.4.9) (Rhodobacter sphaeroides).